Here is a 307-residue protein sequence, read N- to C-terminus: Methionyl-tRNA formyltransferase (307 aa).

108–111 is a (6S)-5,6,7,8-tetrahydrofolate binding site; the sequence is SLLP.

The protein belongs to the Fmt family.

It catalyses the reaction L-methionyl-tRNA(fMet) + (6R)-10-formyltetrahydrofolate = N-formyl-L-methionyl-tRNA(fMet) + (6S)-5,6,7,8-tetrahydrofolate + H(+). Its function is as follows. Attaches a formyl group to the free amino group of methionyl-tRNA(fMet). The formyl group appears to play a dual role in the initiator identity of N-formylmethionyl-tRNA by promoting its recognition by IF2 and preventing the misappropriation of this tRNA by the elongation apparatus. In Xanthomonas axonopodis pv. citri (strain 306), this protein is Methionyl-tRNA formyltransferase.